We begin with the raw amino-acid sequence, 154 residues long: Myoglobin (154 aa).

The 147-residue stretch at 2–148 (GLSDGEWQLV…FRNDIAAKYK (147 aa)) folds into the Globin domain. Ser-4 is modified (phosphoserine). His-65 contributes to the nitrite binding site. Position 65 (His-65) interacts with O2. At Thr-68 the chain carries Phosphothreonine. His-94 is a heme b binding site.

This sequence belongs to the globin family. Monomeric.

It is found in the cytoplasm. The protein localises to the sarcoplasm. The enzyme catalyses Fe(III)-heme b-[protein] + nitric oxide + H2O = Fe(II)-heme b-[protein] + nitrite + 2 H(+). It carries out the reaction H2O2 + AH2 = A + 2 H2O. Monomeric heme protein which primary function is to store oxygen and facilitate its diffusion within muscle tissues. Reversibly binds oxygen through a pentacoordinated heme iron and enables its timely and efficient release as needed during periods of heightened demand. Depending on the oxidative conditions of tissues and cells, and in addition to its ability to bind oxygen, it also has a nitrite reductase activity whereby it regulates the production of bioactive nitric oxide. Under stress conditions, like hypoxia and anoxia, it also protects cells against reactive oxygen species thanks to its pseudoperoxidase activity. This Ctenodactylus gundi (Northern gundi) protein is Myoglobin (MB).